Here is a 694-residue protein sequence, read N- to C-terminus: Elongation factor G (694 aa).

In terms of domain architecture, tr-type G spans 9–288; the sequence is DAIRNIGIMA…VIVKWLPSPL (280 aa). GTP contacts are provided by residues 18–25, 82–86, and 136–139; these read AHIDAGKT, DTPGH, and NKMD.

The protein belongs to the TRAFAC class translation factor GTPase superfamily. Classic translation factor GTPase family. EF-G/EF-2 subfamily.

It localises to the cytoplasm. Catalyzes the GTP-dependent ribosomal translocation step during translation elongation. During this step, the ribosome changes from the pre-translocational (PRE) to the post-translocational (POST) state as the newly formed A-site-bound peptidyl-tRNA and P-site-bound deacylated tRNA move to the P and E sites, respectively. Catalyzes the coordinated movement of the two tRNA molecules, the mRNA and conformational changes in the ribosome. This chain is Elongation factor G, found in Chlamydia trachomatis serovar L2b (strain UCH-1/proctitis).